Here is a 387-residue protein sequence, read N- to C-terminus: Protein REVEILLE 1 (387 aa).

2 stretches are compositionally biased toward polar residues: residues 1–17 (MASSPLTANVQGTNASL) and 27–37 (KQIQFNDQSFG). The tract at residues 1 to 44 (MASSPLTANVQGTNASLRNRDEETADKQIQFNDQSFGGNDYAPK) is disordered. The HTH myb-type domain maps to 50 to 104 (TITKERERWTDEEHKKFVEALKLYGRAWRRIEEHVGSKTAVQIRSHAQKFFSKVA). The H-T-H motif DNA-binding region spans 77-100 (WRRIEEHVGSKTAVQIRSHAQKFF). Disordered stretches follow at residues 105 to 200 (REAT…TANA), 306 to 334 (KAVQNEGSSTGSNTGSVDDTGHTEKTTEP), and 350 to 387 (AFSELRRTNSESNSRGFGPYKKRKMVTEEEEHEIHLHL). Positions 124-134 (RPKRKPAHPYP) are enriched in basic residues. Polar residues predominate over residues 141–166 (ADQTSRSVSPSERDTQSPTSVLSTVG). 2 stretches are compositionally biased toward low complexity: residues 172 to 200 (SLDSSSPNRSLSPVSSASPPAALTTTANA) and 312 to 323 (GSSTGSNTGSVD). Basic and acidic residues predominate over residues 324-333 (DTGHTEKTTE).

It is found in the nucleus. Its function is as follows. Morning-phased transcription factor integrating the circadian clock and auxin pathways. Binds to the evening element (EE) of promoters. Does not act within the central clock, but regulates free auxin levels in a time-of-day specific manner. Positively regulates the expression of YUC8 during the day, but has no effect during the night. Negative regulator of freezing tolerance. The polypeptide is Protein REVEILLE 1 (RVE1) (Arabidopsis thaliana (Mouse-ear cress)).